Here is an 895-residue protein sequence, read N- to C-terminus: Zinc finger protein 574 (895 aa).

3 consecutive C2H2-type zinc fingers follow at residues 16-38 (YVCSECNQLYGSLEEVLMHQNSH), 76-98 (YQCLECGQLLMSPSQLLEHQELH), and 126-148 (YECVDCKALFASQELWLNHRQTH). At Ser-164 the chain carries Phosphoserine. Residues 214–236 (YKCSECSQLFQLPADFLEHQATH) form a C2H2-type 4 zinc finger. The segment at 239-301 (APVPESQEPA…RARRNNSGEA (63 aa)) is disordered. The span at 247–257 (PALQQEVQASS) shows a compositional bias: polar residues. Basic and acidic residues predominate over residues 274 to 287 (HSYELRNGEAIGRD). Residue Ser-298 is modified to Phosphoserine. C2H2-type zinc fingers lie at residues 309–331 (LFCSACDQLFLSPHQLQQHLRSH), 336–358 (FKCPLCSRVFPSPSSLDQHLGDH), 364–386 (FLCVDCGLAFGTEALLLAHRRAH), and 392–413 (HSCPCGKTFVNLTKFLYHRRTH). The segment at 434 to 460 (FPEPAPAETGEPEAPEPPVSEETSAGP) is disordered. 6 C2H2-type zinc fingers span residues 466–489 (YRCLLCSREFGKALQLTRHQRFVH), 495–517 (HKCSICGKMFKKKSHVRNHLRTH), 523–545 (FPCPDCSKPFNSPANLARHRLTH), 551–573 (YRCGDCGKAFTQSSTLRQHRLVH), 579–601 (YRCQECGVRFHRPYRLLMHRYHH), and 607–630 (YKCRECPRSFLLRRLLEVHQLVVH). A C2H2-type 15; degenerate zinc finger spans residues 636-659 (HRCPSCGAAFPSSLRLREHRCAAA). The C2H2-type 16 zinc finger occupies 667 to 689 (FECGTCGKKVGSAARLQAHEAAH). The disordered stretch occupies residues 687–732 (AAHAAAGPGEVLAKEPPAPRAPRATRAPVASPAALGGTATASPAPA). Positions 707–731 (APRATRAPVASPAALGGTATASPAP) are enriched in low complexity. The residue at position 717 (Ser-717) is a Phosphoserine. Thr-724 is modified (phosphothreonine). Ser-728 carries the phosphoserine modification. 4 C2H2-type zinc fingers span residues 737 to 759 (LECSECKKLFSTETSLQVHRRIH), 765 to 787 (YPCPDCGKAFRQSTHLKDHRRLH), 793 to 815 (FACEVCGKAFAISMRLAEHRRIH), and 821 to 843 (YSCPDCGKSYRSFSNLWKHRKTH). At Arg-831 the chain carries Asymmetric dimethylarginine.

Belongs to the krueppel C2H2-type zinc-finger protein family.

It localises to the nucleus. In terms of biological role, may be involved in transcriptional regulation. The protein is Zinc finger protein 574 (ZNF574) of Pongo abelii (Sumatran orangutan).